The following is a 175-amino-acid chain: Translation initiation factor IF-3, chloroplastic (175 aa).

The protein belongs to the IF-3 family. In terms of assembly, monomer.

The protein localises to the plastid. The protein resides in the chloroplast. IF-3 binds to the 30S ribosomal subunit and shifts the equilibrium between 70S ribosomes and their 50S and 30S subunits in favor of the free subunits, thus enhancing the availability of 30S subunits on which protein synthesis initiation begins. This chain is Translation initiation factor IF-3, chloroplastic, found in Cyanidioschyzon merolae (strain NIES-3377 / 10D) (Unicellular red alga).